A 170-amino-acid polypeptide reads, in one-letter code: 2-oxo-4-hydroxy-4-carboxy-5-ureidoimidazoline decarboxylase (170 aa).

The active-site Proton donor is His-67. Residues Pro-68, 84–88, and 119–123 contribute to the substrate site; these read SQREQ and FVLAL.

It belongs to the OHCU decarboxylase family.

Its subcellular location is the peroxisome. The catalysed reaction is 5-hydroxy-2-oxo-4-ureido-2,5-dihydro-1H-imidazole-5-carboxylate + H(+) = (S)-allantoin + CO2. Its pathway is purine metabolism; urate degradation; (S)-allantoin from urate: step 3/3. In terms of biological role, catalyzes the stereoselective decarboxylation of 2-oxo-4-hydroxy-4-carboxy-5-ureidoimidazoline (OHCU) to (S)-allantoin. In Bos taurus (Bovine), this protein is 2-oxo-4-hydroxy-4-carboxy-5-ureidoimidazoline decarboxylase (URAD).